We begin with the raw amino-acid sequence, 324 residues long: MYGQNVRNVSYYPPYGYNGYKQSGERMWRMSHSLPSGMDTDFTSSYPGPSAMNPRGRGGYNDFSGGGSAMGSMCNMAPAQSTNSLNSGGDGGGGDTQAVNGTNLIVNYLPQDMTDRELYALFRTCGPINTCRIMKDYKTGYSFGYAFVDFASEIDAQNAIKTVNGITVRNKRLKVSYARPGGESIKDTNLYVTNLPRTITDDELEKIFGKYGNIVQKNILRDKLTGRPRGVAFVRFNKREEAQEAISALNNVIPEGASQPLTVRLAEEHGKMKAHHFMNQLGMGPPAAPIPAAGPGYNNMVHRGRQNKMRNHKVHPYHNPQKFI.

2 consecutive RRM domains span residues 102–180 (TNLI…YARP) and 188–268 (TNLY…LAEE).

Expressed in somatic cells of both sexes throughout development, but not in the pole cells which are the progenitors of the germline.

It is found in the nucleus. Unknown; apparently not involved in somatic sex determination. This Musca domestica (House fly) protein is Sex-lethal homolog (SXL).